The chain runs to 175 residues: Lipoprotein signal peptidase (175 aa).

A run of 4 helical transmembrane segments spans residues Leu-25 to Val-45, Val-56 to Ala-76, Trp-81 to Leu-101, and Phe-110 to Val-130. Active-site residues include Asp-136 and Asp-154. The chain crosses the membrane as a helical span at residues His-146–Val-166.

This sequence belongs to the peptidase A8 family.

It localises to the cell inner membrane. It carries out the reaction Release of signal peptides from bacterial membrane prolipoproteins. Hydrolyzes -Xaa-Yaa-Zaa-|-(S,diacylglyceryl)Cys-, in which Xaa is hydrophobic (preferably Leu), and Yaa (Ala or Ser) and Zaa (Gly or Ala) have small, neutral side chains.. It participates in protein modification; lipoprotein biosynthesis (signal peptide cleavage). Its function is as follows. This protein specifically catalyzes the removal of signal peptides from prolipoproteins. The chain is Lipoprotein signal peptidase from Cupriavidus necator (strain ATCC 17699 / DSM 428 / KCTC 22496 / NCIMB 10442 / H16 / Stanier 337) (Ralstonia eutropha).